A 307-amino-acid chain; its full sequence is MNSTEPDSDRVTRTDRLNAPEIADVQALARAAGDADGADPFDEHTLLRLRDPHAPTHHLTARTANGTLTGYAHLDITNPTSGTGVELAVHPAYRRRGTGRALARSVRAAVTGPLRAWAHGDHPSAAALAVDLDYRRARVLWQLRRPLTAPIPEPPLPDGVTLRAYRPGADDDAWLALNAKAFADHPEQGQWTAADLQARRDEPWFDAAGFLLAVDPAGQLLGFHWTKIHERPGSARIGEVYVLGVDPTAHGGGLGKALTAAGLAYLRDQRGLDRVMLYVDESNTAAVALYERLGFARWSAHVNYQLG.

N-acetyltransferase domains are found at residues 12 to 157 (TRTD…PPLP) and 160 to 307 (VTLR…YQLG). Glu43 is a binding site for 1D-myo-inositol 2-(L-cysteinylamino)-2-deoxy-alpha-D-glucopyranoside. 87–89 (LAV) is a binding site for acetyl-CoA. 1D-myo-inositol 2-(L-cysteinylamino)-2-deoxy-alpha-D-glucopyranoside contacts are provided by Glu187, Lys227, and Glu239. Residues 243-245 (LGV) and 250-256 (HGGGLGK) each bind acetyl-CoA. Tyr278 contacts 1D-myo-inositol 2-(L-cysteinylamino)-2-deoxy-alpha-D-glucopyranoside.

It belongs to the acetyltransferase family. MshD subfamily. Monomer.

The catalysed reaction is 1D-myo-inositol 2-(L-cysteinylamino)-2-deoxy-alpha-D-glucopyranoside + acetyl-CoA = mycothiol + CoA + H(+). Functionally, catalyzes the transfer of acetyl from acetyl-CoA to desacetylmycothiol (Cys-GlcN-Ins) to form mycothiol. This chain is Mycothiol acetyltransferase, found in Salinispora tropica (strain ATCC BAA-916 / DSM 44818 / JCM 13857 / NBRC 105044 / CNB-440).